The primary structure comprises 31 residues: Photosystem I reaction center subunit XII (31 aa).

The helical transmembrane segment at 7-26 threads the bilayer; that stretch reads QVYVALVIALLPAVLAFRLS.

It belongs to the PsaM family.

The protein localises to the cellular thylakoid membrane. This is Photosystem I reaction center subunit XII from Thermosynechococcus vestitus (strain NIES-2133 / IAM M-273 / BP-1).